The primary structure comprises 468 residues: Ribulose bisphosphate carboxylase large chain (468 aa).

Lysine 5 bears the N6,N6,N6-trimethyllysine mark. Substrate contacts are provided by asparagine 114 and threonine 164. Catalysis depends on lysine 166, which acts as the Proton acceptor. Lysine 168 serves as a coordination point for substrate. Mg(2+)-binding residues include lysine 192, aspartate 194, and glutamate 195. At lysine 192 the chain carries N6-carboxylysine. Histidine 285 acts as the Proton acceptor in catalysis. Substrate-binding residues include arginine 286, histidine 318, and serine 370.

The protein belongs to the RuBisCO large chain family. Type I subfamily. Heterohexadecamer of 8 large chains and 8 small chains; disulfide-linked. The disulfide link is formed within the large subunit homodimers. The cofactor is Mg(2+). Post-translationally, the disulfide bond which can form in the large chain dimeric partners within the hexadecamer appears to be associated with oxidative stress and protein turnover.

The protein resides in the plastid. It is found in the chloroplast. It carries out the reaction 2 (2R)-3-phosphoglycerate + 2 H(+) = D-ribulose 1,5-bisphosphate + CO2 + H2O. The enzyme catalyses D-ribulose 1,5-bisphosphate + O2 = 2-phosphoglycolate + (2R)-3-phosphoglycerate + 2 H(+). In terms of biological role, ruBisCO catalyzes two reactions: the carboxylation of D-ribulose 1,5-bisphosphate, the primary event in carbon dioxide fixation, as well as the oxidative fragmentation of the pentose substrate in the photorespiration process. Both reactions occur simultaneously and in competition at the same active site. This is Ribulose bisphosphate carboxylase large chain from Salvia divinorum (Maria pastora).